The sequence spans 115 residues: Ribonuclease P protein component (115 aa).

It belongs to the RnpA family. Consists of a catalytic RNA component (M1 or rnpB) and a protein subunit.

It catalyses the reaction Endonucleolytic cleavage of RNA, removing 5'-extranucleotides from tRNA precursor.. RNaseP catalyzes the removal of the 5'-leader sequence from pre-tRNA to produce the mature 5'-terminus. It can also cleave other RNA substrates such as 4.5S RNA. The protein component plays an auxiliary but essential role in vivo by binding to the 5'-leader sequence and broadening the substrate specificity of the ribozyme. This chain is Ribonuclease P protein component, found in Phytoplasma australiense.